A 1690-amino-acid polypeptide reads, in one-letter code: Collagen alpha-4(IV) chain (1690 aa).

The first 38 residues, 1–38 (MWSLHIVLMRCSFRLTKSLATGPWSLILILFSVQYVYG), serve as a signal peptide directing secretion. Positions 39–64 (SGKKYIGPCGGRDCSVCHCVPEKGSR) are 7S domain. 2 disordered regions span residues 61-173 (KGSR…GEKG) and 187-258 (GDRG…GPTL). Residues 65–1459 (GPPGPPGPQG…IGDPGPKGFG (1395 aa)) form a triple-helical region region. Residues 66-75 (PPGPPGPQGP) are compositionally biased toward pro residues. Over residues 76-88 (IGPLGAPGPIGLS) the composition is skewed to low complexity. The Cell attachment site signature appears at 94 to 96 (RGD). N-linked (GlcNAc...) asparagine glycosylation occurs at Asn142. A Cell attachment site motif is present at residues 145–147 (RGD). The span at 149 to 164 (GFPGGRGALGPGGPLG) shows a compositional bias: gly residues. Positions 189 to 191 (RGD) match the Cell attachment site motif. Over residues 199-208 (GSWGAGGPAG) the composition is skewed to gly residues. The short motif at 310–312 (RGD) is the Cell attachment site element. Disordered regions lie at residues 369-390 (PGDPGFPGRYGETGDVGPPGPP), 405-451 (GPPG…GLQG), and 469-1457 (GIKG…GPKG). The span at 412–434 (FPGLPGLPGEAGIPGRPDSAPGK) shows a compositional bias: low complexity. Pro residues-rich tracts occupy residues 498-507 (PMGPPGPPGL) and 529-540 (PGPPGAEGPPGL). The segment covering 586–607 (HGRDGHAGEKGDPGPPGDHEDA) has biased composition (basic and acidic residues). Low complexity predominate over residues 644–655 (PGVPGHPGVRGP). Asn669 carries an N-linked (GlcNAc...) asparagine glycan. The segment covering 681 to 690 (FDGPPGPKGF) has biased composition (pro residues). 2 consecutive short sequence motifs (cell attachment site) follow at residues 724–726 (RGD) and 785–787 (RGD). Residues 849-858 (GAPGGKGQPG) show a composition bias toward gly residues. Composition is skewed to low complexity over residues 866-880 (AGMKGLPGLPGRPGA) and 907-917 (PRGLPGFPGFP). The Cell attachment site signature appears at 989 to 991 (RGD). The span at 1023–1032 (PGPPGPPGPP) shows a compositional bias: pro residues. A compositionally biased stretch (low complexity) spans 1108–1117 (PGIQGPRGSP). Over residues 1119–1131 (RPGPPGSSGPPGC) the composition is skewed to pro residues. The Cell attachment site signature appears at 1212–1214 (RGD). 5 stretches are compositionally biased toward pro residues: residues 1220–1243 (ISPPGPRGKKGPPGPPGSSGPPGP), 1256–1280 (DPGPPGDQGPPGPDGPRGAPGPPGL), 1297–1309 (PGPPGPPGPPGPP), 1338–1353 (FPGPPGEKGLPGPPGR), and 1443–1452 (GPGPPGPIGD). A Collagen IV NC1 domain is found at 1465–1690 (GFLLVLHSQT…SRCQVCVKYS (226 aa)). 6 disulfides stabilise this stretch: Cys1480-Cys1569, Cys1513-Cys1566, Cys1525-Cys1531, Cys1588-Cys1686, Cys1622-Cys1683, and Cys1634-Cys1641.

The protein belongs to the type IV collagen family. In terms of assembly, there are six type IV collagen isoforms, alpha 1(IV)-alpha 6(IV), each of which can form a triple helix structure with 2 other chains to generate type IV collagen network. The alpha 3(IV) chain forms a triple helical protomer with alpha 4(IV) and alpha 5(IV); this triple helical structure dimerizes through NC1-NC1 domain interactions such that the alpha 3(IV), alpha 4(IV) and alpha 5(IV) chains of one protomer connect with the alpha 5(IV), alpha 4(IV) and alpha 3(IV) chains of the opposite protomer, respectively. Associates with LAMB2 at the neuromuscular junction and in GBM. Prolines at the third position of the tripeptide repeating unit (G-X-Y) are hydroxylated in some or all of the chains. In terms of processing, type IV collagens contain numerous cysteine residues which are involved in inter- and intramolecular disulfide bonding. 12 of these, located in the NC1 domain, are conserved in all known type IV collagens. Post-translationally, the trimeric structure of the NC1 domains is stabilized by covalent bonds between Lys and Met residues. Expressed in Bruch's membrane, outer plexiform layer, inner nuclear layer, inner plexiform layer, ganglion cell layer, inner limiting membrane and around the blood vessels of the retina (at protein level). Alpha 3 and alpha 4 type IV collagens are colocalized and present in kidney, eye, basement membranes of lens capsule, cochlea, lung, skeletal muscle, aorta, synaptic fibers, fetal kidney and fetal lung. PubMed:8083201 reports similar levels of expression of alpha 3 and alpha 4 type IV collagens in kidney, but PubMed:7523402 reports that in kidney levels of alpha 3 type IV collagen are significantly lower than those of alpha 4 type IV collagen. Highest levels of expression of alpha 4 type IV collagen are detected in kidney, calvaria, neuroretina and cardiac muscle. Lower levels of expression are observed in brain, lung and thymus, and no expression is detected in choroid plexus, liver, adrenal, pancreas, ileum or skin.

The protein localises to the secreted. It localises to the extracellular space. It is found in the extracellular matrix. Its subcellular location is the basement membrane. Type IV collagen is the major structural component of glomerular basement membranes (GBM), forming a 'chicken-wire' meshwork together with laminins, proteoglycans and entactin/nidogen. This Homo sapiens (Human) protein is Collagen alpha-4(IV) chain (COL4A4).